The primary structure comprises 89 residues: UPF0297 protein SEQ_2150 (89 aa).

The protein belongs to the UPF0297 family.

This Streptococcus equi subsp. equi (strain 4047) protein is UPF0297 protein SEQ_2150.